A 103-amino-acid chain; its full sequence is Histone H4 (103 aa).

Residues 1–14 (MSGRGKGGKGLGKG) show a composition bias toward gly residues. The interval 1–20 (MSGRGKGGKGLGKGGAKRHR) is disordered. The DNA-binding element occupies 17–21 (KRHRK).

Belongs to the histone H4 family. As to quaternary structure, the nucleosome is a histone octamer containing two molecules each of H2A, H2B, H3 and H4 assembled in one H3-H4 heterotetramer and two H2A-H2B heterodimers. The octamer wraps approximately 147 bp of DNA.

It is found in the nucleus. The protein localises to the chromosome. Its function is as follows. Core component of nucleosome. Nucleosomes wrap and compact DNA into chromatin, limiting DNA accessibility to the cellular machineries which require DNA as a template. Histones thereby play a central role in transcription regulation, DNA repair, DNA replication and chromosomal stability. DNA accessibility is regulated via a complex set of post-translational modifications of histones, also called histone code, and nucleosome remodeling. The protein is Histone H4 of Eimeria tenella (Coccidian parasite).